A 178-amino-acid chain; its full sequence is ATP-dependent protease subunit HslV (178 aa).

Thr7 is an active-site residue. The Na(+) site is built by Gly162, Cys165, and Thr168.

It belongs to the peptidase T1B family. HslV subfamily. As to quaternary structure, a double ring-shaped homohexamer of HslV is capped on each side by a ring-shaped HslU homohexamer. The assembly of the HslU/HslV complex is dependent on binding of ATP.

Its subcellular location is the cytoplasm. The catalysed reaction is ATP-dependent cleavage of peptide bonds with broad specificity.. Allosterically activated by HslU binding. In terms of biological role, protease subunit of a proteasome-like degradation complex believed to be a general protein degrading machinery. The protein is ATP-dependent protease subunit HslV of Burkholderia multivorans (strain ATCC 17616 / 249).